The primary structure comprises 151 residues: Cytochrome c oxidase subunit 5B, mitochondrial (151 aa).

Residues Met1–Phe17 constitute a mitochondrion transit peptide. At Val18–Gly85 the chain is on the mitochondrial matrix side. Residues Lys86–Gly108 traverse the membrane as a helical segment. Residues Leu109–Lys151 lie on the Mitochondrial intermembrane side of the membrane.

Belongs to the cytochrome c oxidase IV family. Component of the cytochrome c oxidase (complex IV, CIV), a multisubunit enzyme composed of 12 subunits. The complex is composed of a catalytic core of 3 subunits COX1, COX2 and COX3, encoded in the mitochondrial DNA, and 9 supernumerary subunits COX4, COX5A (or COX5B), COX6, COX7, COX8, COX9, COX12, COX13 and COX26, which are encoded in the nuclear genome. COX5A is the predominant subunit V during aerobic/normoxic growth, it gets replaced by COX5B under anaerobic/hypoxic conditions. The complex exists as a monomer or a dimer and forms supercomplexes (SCs) in the inner mitochondrial membrane with a dimer of ubiquinol-cytochrome c oxidoreductase (cytochrome b-c1 complex, complex III, CIII), resulting in 2 different assemblies (supercomplexes III(2)IV and III(2)IV(2)).

Its subcellular location is the mitochondrion inner membrane. It functions in the pathway energy metabolism; oxidative phosphorylation. In terms of biological role, component of the cytochrome c oxidase, the last enzyme in the mitochondrial electron transport chain which drives oxidative phosphorylation. The respiratory chain contains 3 multisubunit complexes succinate dehydrogenase (complex II, CII), ubiquinol-cytochrome c oxidoreductase (cytochrome b-c1 complex, complex III, CIII) and cytochrome c oxidase (complex IV, CIV), that cooperate to transfer electrons derived from NADH and succinate to molecular oxygen, creating an electrochemical gradient over the inner membrane that drives transmembrane transport and the ATP synthase. Cytochrome c oxidase is the component of the respiratory chain that catalyzes the reduction of oxygen to water. Electrons originating from reduced cytochrome c in the intermembrane space (IMS) are transferred via the dinuclear copper A center (CU(A)) of COX2 and heme A of COX1 to the active site in COX1, a binuclear center (BNC) formed by heme A3 and copper B (CU(B)). The BNC reduces molecular oxygen to 2 water molecules using 4 electrons from cytochrome c in the IMS and 4 protons from the mitochondrial matrix. This chain is Cytochrome c oxidase subunit 5B, mitochondrial (COX5B), found in Saccharomyces cerevisiae (strain ATCC 204508 / S288c) (Baker's yeast).